The primary structure comprises 308 residues: Polyketide transferase claH (308 aa).

An abhydrolase domain region spans residues 50-280; sequence SDIAVYFSQQ…RVEVAAGKSH (231 aa).

This sequence belongs to the polyketide transferase af380 family.

It functions in the pathway secondary metabolite biosynthesis. Functionally, polyketide transferase; part of the cla gene cluster that produces clavatol and ortho-quinone methide. The clavatol biosynthesis cluster cla and the terrestric acid cluster tra are both involved in the production of peniphenones and penilactones. The non-reducing PKS claF is responsible for the formation of clavatol from successive condensations of 3 malonyl-CoA units, presumably with a simple acetyl-CoA starter unit, and 2 methylation steps. The esterase claE probably collaborates with claF by catalyzing the hydrolysis of ACP-bound acyl intermediates to free the ACP from stalled intermediates. The clavatol oxidase claD then converts clavatol to hydroxyclavatol. Spontaneous dehydration of hydroxyclavatol leads to the accumulation of the highly active ortho-quinone methide. On the other hand, the PKS-NRPS hybrid traA is involved in the formation of crustosic acid, with the help of traB and traD. The polyketide synthase module (PKS) of traA is responsible for the synthesis of the polyketide backbone via the condensation of an acetyl-CoA starter unit with 3 malonyl-CoA units. The downstream nonribosomal peptide synthetase (NRPS) module then amidates the carboxyl end of the polyketide with L-malic acid. Because traA lacks a designated enoylreductase (ER) domain, the required activity is provided the enoyl reductase traG. Crustosic acid undergoes decarboxylation and isomerization to the terrestric acid, catalyzed by the 2-oxoglutarate-dependent dioxygenase traH. Both acids are further converted to the 2 gamma-butyrolactones (R)-5-methyltetronic acid and (S)-5-carboxylmethyltetronic acid, with involvement of the cytochrome P450 monooxygenase claJ. Spontaneous addition of the methide to these gamma-butyrolactones leads to peniphenone D and penilactone D, which undergo again stereospecific attacking by methide to give penilactones A and B. The function of the polyketide transferase claH has not been investigated yet. The sequence is that of Polyketide transferase claH from Penicillium crustosum (Blue mold fungus).